The following is a 555-amino-acid chain: Connector enhancer of kinase suppressor of ras 3 (555 aa).

One can recognise an SAM domain in the interval 7-72 (WSPKQVVDWT…LEAVDLLCAL (66 aa)). In terms of domain architecture, CRIC spans 80–174 (NMKNLVLKLR…TAVQKDCLVA (95 aa)). Positions 211–293 (EVHLPNVRPG…GVVLLLKKRP (83 aa)) constitute a PDZ domain. 3 disordered regions span residues 308-333 (RWKPPLVQTSPPPTTTQSPESTMDAS), 348-391 (PPPA…LDQE), and 518-538 (PFQEEGPKKKSASSSAKASSG). Over residues 311-329 (PPLVQTSPPPTTTQSPEST) the composition is skewed to low complexity. In terms of domain architecture, DUF1170 spans 325-546 (SPESTMDASL…SGEPSLLVSW (222 aa)). Phosphoserine occurs at positions 381 and 383.

It belongs to the CNKSR family. As to quaternary structure, interacts with epithelial sodium channel ENaC. Interacts directly with SCNN1A (ENaC subunit alpha) and SCNN1B (ENaC subunit beta) C-terminal tails. Interacts with ENaC regulatory proteins NEDD4L, RAF1 and SGK1.

It localises to the cytoplasm. Its subcellular location is the apical cell membrane. Functionally, involved in transepithelial sodium transport. Regulates aldosterone-induced and epithelial sodium channel (ENaC)-mediated sodium transport through regulation of ENaC cell surface expression. Acts as a scaffold protein coordinating the assembly of an ENaC-regulatory complex (ERC). The sequence is that of Connector enhancer of kinase suppressor of ras 3 (Cnksr3) from Rattus norvegicus (Rat).